A 178-amino-acid chain; its full sequence is Probable chorismate pyruvate-lyase (178 aa).

Residues R73, L111, and E163 each contribute to the substrate site.

This sequence belongs to the UbiC family.

It is found in the cytoplasm. It catalyses the reaction chorismate = 4-hydroxybenzoate + pyruvate. It participates in cofactor biosynthesis; ubiquinone biosynthesis. Its function is as follows. Removes the pyruvyl group from chorismate, with concomitant aromatization of the ring, to provide 4-hydroxybenzoate (4HB) for the ubiquinone pathway. This is Probable chorismate pyruvate-lyase from Pseudomonas aeruginosa (strain ATCC 15692 / DSM 22644 / CIP 104116 / JCM 14847 / LMG 12228 / 1C / PRS 101 / PAO1).